We begin with the raw amino-acid sequence, 154 residues long: Mitochondrial fission 1 protein (154 aa).

The Cytoplasmic segment spans residues 1-124; it reads MEDLLNEVVP…KEIDKEVAKG (124 aa). A helical membrane pass occupies residues 125-145; that stretch reads MVVAGGAALVLGGILGLGIAM. The Mitochondrial intermembrane segment spans residues 146-154; the sequence is ARNKQKREK.

It belongs to the FIS1 family.

It is found in the mitochondrion outer membrane. Involved in the fragmentation of the mitochondrial network and its perinuclear clustering. Functions downstream of Pink1 and upstream of Drp1 to regulate mitochondrial fission. This Drosophila melanogaster (Fruit fly) protein is Mitochondrial fission 1 protein.